The following is a 491-amino-acid chain: F-box protein At3g59000 (491 aa).

The 49-residue stretch at 1-49 (MDRVGSLPDELLSHILSFLTTKEAALTSLLSKRWRYLIAFVPNLAFDDI) folds into the F-box domain.

Part of a SCF (ASK-cullin-F-box) protein ligase complex. Interacts with ASK4.

It localises to the nucleus. It functions in the pathway protein modification; protein ubiquitination. Its function is as follows. Component of SCF(ASK-cullin-F-box) E3 ubiquitin ligase complexes, which may mediate the ubiquitination and subsequent proteasomal degradation of target proteins. This is F-box protein At3g59000 from Arabidopsis thaliana (Mouse-ear cress).